The primary structure comprises 415 residues: Glutamyl-tRNA reductase (415 aa).

Residues 49 to 52 (TCNR), Ser-104, 109 to 111 (EPQ), and Gln-115 each bind substrate. Residue Cys-50 is the Nucleophile of the active site. Residue 184-189 (GAGEMI) participates in NADP(+) binding.

Belongs to the glutamyl-tRNA reductase family. As to quaternary structure, homodimer.

It catalyses the reaction (S)-4-amino-5-oxopentanoate + tRNA(Glu) + NADP(+) = L-glutamyl-tRNA(Glu) + NADPH + H(+). Its pathway is porphyrin-containing compound metabolism; protoporphyrin-IX biosynthesis; 5-aminolevulinate from L-glutamyl-tRNA(Glu): step 1/2. Catalyzes the NADPH-dependent reduction of glutamyl-tRNA(Glu) to glutamate 1-semialdehyde (GSA). In Neisseria meningitidis serogroup C / serotype 2a (strain ATCC 700532 / DSM 15464 / FAM18), this protein is Glutamyl-tRNA reductase.